A 184-amino-acid polypeptide reads, in one-letter code: GTP cyclohydrolase 1 (184 aa).

Residues C75, H78, and C146 each coordinate Zn(2+).

It belongs to the GTP cyclohydrolase I family. Homomer.

It catalyses the reaction GTP + H2O = 7,8-dihydroneopterin 3'-triphosphate + formate + H(+). Its pathway is cofactor biosynthesis; 7,8-dihydroneopterin triphosphate biosynthesis; 7,8-dihydroneopterin triphosphate from GTP: step 1/1. The protein is GTP cyclohydrolase 1 of Streptococcus pneumoniae (strain Hungary19A-6).